The chain runs to 475 residues: Doublecortin domain-containing protein 2 (475 aa).

Doublecortin domains are found at residues 17–100 (KSVL…LNYL) and 139–221 (CTIF…LPYS). A disordered region spans residues 234-475 (YGQKASSLPP…ESNKASSAVA (242 aa)). Residues 252–272 (GSGNYRQSKSTIGSSDNSSPQ) are compositionally biased toward polar residues. Residue serine 270 is modified to Phosphoserine. Over residues 353 to 365 (EKTSKDANQKDDF) the composition is skewed to basic and acidic residues. A compositionally biased stretch (acidic residues) spans 407–419 (TDEENGEELDQVT). Over residues 455–475 (TVTSPQENEGNESNKASSAVA) the composition is skewed to polar residues.

In terms of assembly, interacts with DVL1, DVL2 and DVL3. Expressed in hair cells of the inner ear.

The protein localises to the cell projection. It localises to the cilium. Its subcellular location is the cytoplasm. The protein resides in the cytoskeleton. It is found in the cilium axoneme. The protein localises to the kinocilium. Protein that plays a role in the inhibition of canonical Wnt signaling pathway. May be involved in neuronal migration during development of the cerebral neocortex. Involved in the control of ciliogenesis and ciliary length. In Rattus norvegicus (Rat), this protein is Doublecortin domain-containing protein 2 (Dcdc2).